The primary structure comprises 349 residues: Pseudouridylate synthase TRUB1 (349 aa).

Position 2 is an N-acetylalanine (Ala2). At Ser11 the chain carries Phosphoserine. Residue Asp121 is the Nucleophile of the active site.

It belongs to the pseudouridine synthase TruB family. In terms of tissue distribution, highly expressed in heart, skeletal muscle and liver. Expressed at lower levels in lung, small intestine, kidney and spleen.

The protein localises to the nucleus. The protein resides in the cytoplasm. Its subcellular location is the cytosol. It carries out the reaction a uridine in mRNA = a pseudouridine in mRNA. The catalysed reaction is a uridine in tRNA = a pseudouridine in tRNA. It catalyses the reaction uridine(55) in tRNA = pseudouridine(55) in tRNA. Functionally, pseudouridine synthase that catalyzes pseudouridylation of mRNAs and tRNAs. Mediates pseudouridylation of mRNAs with the consensus sequence 5'-GUUCNANNC-3', harboring a stem-loop structure. Constitutes the major pseudouridine synthase acting on mRNAs. Also catalyzes pseudouridylation of some tRNAs, including synthesis of pseudouridine(55) from uracil-55, in the psi GC loop of a subset of tRNAs. Promotes the processing of pri-let-7 microRNAs (pri-miRNAs) independently of its RNA pseudouridylate synthase activity. Acts by binding to the stem-loop structure on pri-let-7, preventing LIN28-binding (LIN28A and/or LIN28B), thereby enhancing the interaction between pri-let-7 and the microprocessor DGCR8, which mediates miRNA maturation. In Homo sapiens (Human), this protein is Pseudouridylate synthase TRUB1.